Here is an 896-residue protein sequence, read N- to C-terminus: Lipoxygenase 2, chloroplastic (896 aa).

The transit peptide at 1–56 (MYCRESLSSLQTLNVAKSLSSLFPKQSALINPISAGRRNNLPRPNLRRRCKVTASR) directs the protein to the chloroplast. The 121-residue stretch at 79 to 199 (ITAQEEFLEG…VDPTKRIFFS (121 aa)) folds into the PLAT domain. The interval 175–232 (GSITFTCESWVAPKSVDPTKRIFFSDKSYLPSQTPEPLKKYRKEELETLQGKNREEVG) is EIF4E2 binding. In terms of domain architecture, Lipoxygenase spans 202–896 (SYLPSQTPEP…GMGVPYSISI (695 aa)). Positions 554, 559, 746, 750, and 896 each coordinate Fe cation.

This sequence belongs to the lipoxygenase family. In terms of assembly, interacts with EIF4E2. Fe cation serves as cofactor. In leaves and inflorescences but not abundant in seeds, roots and stems.

It is found in the plastid. The protein resides in the chloroplast. Its subcellular location is the cytoplasm. It catalyses the reaction (9Z,12Z)-octadecadienoate + O2 = (13S)-hydroperoxy-(9Z,11E)-octadecadienoate. It carries out the reaction (9Z,12Z,15Z)-octadecatrienoate + O2 = (13S)-hydroperoxy-(9Z,11E,15Z)-octadecatrienoate. The protein operates within lipid metabolism; oxylipin biosynthesis. Its function is as follows. 13S-lipoxygenase that can use linolenic acid as substrates. Plant lipoxygenases may be involved in a number of diverse aspects of plant physiology including growth and development, pest resistance, and senescence or responses to wounding. Catalyzes the hydroperoxidation of lipids containing a cis,cis-1,4-pentadiene structure. Required for the wound-induced synthesis of jasmonic acid (JA) in leaves. In Arabidopsis thaliana (Mouse-ear cress), this protein is Lipoxygenase 2, chloroplastic (LOX2).